We begin with the raw amino-acid sequence, 347 residues long: High mobility group protein 20A (347 aa).

Composition is skewed to polar residues over residues 1-10 (MENLMTSSTL) and 40-49 (SGATSSTNNP). Disordered regions lie at residues 1–113 (MENL…YVRF) and 179–211 (FSRK…TEVK). A compositionally biased stretch (low complexity) spans 55 to 66 (LSQGQLLQSESS). Positions 72-82 (NEQRHEDEQRS) are enriched in basic and acidic residues. Residues 83-96 (KRGGWSKGRKRKKP) are compositionally biased toward basic residues. The HMG box DNA-binding region spans 103-171 (PKSPLTGYVR…RYMKELEQYQ (69 aa)). Serine 105 carries the phosphoserine modification. Residues 182–211 (KTQDRQKGKSHRQDAARQATHDHEKETEVK) show a composition bias toward basic and acidic residues. The stretch at 229–273 (SKAREAELRQLRKSNMEFEERNAALQKHVESMRTAVEKLEVDVIQ) forms a coiled coil.

As to quaternary structure, interacts with DTNB. Ubiquitous.

The protein resides in the nucleus. Its function is as follows. Plays a role in neuronal differentiation as chromatin-associated protein. Acts as inhibitor of HMG20B. Overcomes the repressive effects of the neuronal silencer REST and induces the activation of neuronal-specific genes. Involved in the recruitment of the histone methyltransferase KMT2A/MLL1 and consequent increased methylation of histone H3 lysine 4. The polypeptide is High mobility group protein 20A (HMG20A) (Homo sapiens (Human)).